Consider the following 372-residue polypeptide: uncharacterized protein (372 aa).

A helical membrane pass occupies residues 224–244 (GSTVGVVIGVVIVIFIGFIII). A Phosphoserine modification is found at serine 329.

The protein resides in the vacuole membrane. This is an uncharacterized protein from Saccharomyces cerevisiae (strain ATCC 204508 / S288c) (Baker's yeast).